The primary structure comprises 412 residues: Protein MITOFERRINLIKE 1, chloroplastic (412 aa).

A chloroplast-targeting transit peptide spans 1 to 92 (MEARLSETLG…PGPEFLKWIK (92 aa)). The interval 43–83 (VRNPKLKTKSSQKPPKFSANFRRSDPPFASTSISDPTHEKP) is disordered. 3 Solcar repeats span residues 112–198 (ERAI…GKSL), 206–288 (PTVL…LKAA), and 298–392 (LEPL…ARLT). A run of 6 helical transmembrane segments spans residues 115 to 135 (IIGA…LLPL), 167 to 187 (ILGF…SSAV), 208 to 228 (VLIP…IMVP), 262 to 282 (AGYS…YSSF), 303 to 323 (SVCC…PLDV), and 365 to 385 (TRGM…GYFA).

It belongs to the mitochondrial carrier (TC 2.A.29) family. As to expression, expressed in leaves, developing flowers and siliques.

The protein resides in the plastid. It is found in the chloroplast inner membrane. Functionally, probably involved in iron transport into chloroplasts. The sequence is that of Protein MITOFERRINLIKE 1, chloroplastic (MFL1) from Arabidopsis thaliana (Mouse-ear cress).